Here is a 304-residue protein sequence, read N- to C-terminus: Bacteriochlorophyll synthase 33 kDa chain (304 aa).

9 consecutive transmembrane segments (helical) span residues 26-46 (VTWFPPMWAYLCGAVSSNVPI), 51-71 (GVVVLGIVLAGPIVCGMSQAA), 94-114 (IPGLWGLYIAIAMSLLSLVVG), 117-137 (LGSWGFVATLLGVAAAWAYSV), 151-171 (GLVGLAYEGLPWITGAAVLLA), 178-198 (GFPIVMMATLYALGAHGIMTI), 227-247 (IACTVMGLAQALVITMLYLFS), 250-270 (YHATAVLVLLCGQFWAMSVWM), and 279-299 (WYNGTGVVMYVSGMMITAFAI).

It localises to the cell membrane. It participates in porphyrin-containing compound metabolism; bacteriochlorophyll biosynthesis (light-independent). Its function is as follows. Catalyzes the esterification of bacteriochlorophyllide a by geranylgeraniol-PPi. The chain is Bacteriochlorophyll synthase 33 kDa chain (bchG) from Rhodobacter capsulatus (strain ATCC BAA-309 / NBRC 16581 / SB1003).